A 680-amino-acid chain; its full sequence is 1-deoxy-D-xylulose-5-phosphate synthase (680 aa).

Residues 1–17 show a composition bias toward low complexity; the sequence is MQQSPHSPQSQSLSASA. Residues 1–20 are disordered; sequence MQQSPHSPQSQSLSASAVDS. Thiamine diphosphate-binding positions include His113 and 154–156; that span reads GHS. Asp185 provides a ligand contact to Mg(2+). Residues 186–187, Asn214, Phe323, and Glu408 each bind thiamine diphosphate; that span reads GA. Residue Asn214 participates in Mg(2+) binding.

This sequence belongs to the transketolase family. DXPS subfamily. In terms of assembly, homodimer. Mg(2+) is required as a cofactor. Thiamine diphosphate serves as cofactor.

The catalysed reaction is D-glyceraldehyde 3-phosphate + pyruvate + H(+) = 1-deoxy-D-xylulose 5-phosphate + CO2. Its pathway is metabolic intermediate biosynthesis; 1-deoxy-D-xylulose 5-phosphate biosynthesis; 1-deoxy-D-xylulose 5-phosphate from D-glyceraldehyde 3-phosphate and pyruvate: step 1/1. Its function is as follows. Catalyzes the acyloin condensation reaction between C atoms 2 and 3 of pyruvate and glyceraldehyde 3-phosphate to yield 1-deoxy-D-xylulose-5-phosphate (DXP). This Psychrobacter cryohalolentis (strain ATCC BAA-1226 / DSM 17306 / VKM B-2378 / K5) protein is 1-deoxy-D-xylulose-5-phosphate synthase.